We begin with the raw amino-acid sequence, 521 residues long: Feruloyl esterase B (521 aa).

The first 17 residues, 1-17 (MKVASLLSLALPGAALA), serve as a signal peptide directing secretion. Cystine bridges form between C26–C72 and C61–C111. N37, N51, N77, N95, N144, and N177 each carry an N-linked (GlcNAc...) asparagine glycan. 3 cysteine pairs are disulfide-bonded: C184–C438, C253–C270, and C279–C288. The Acyl-ester intermediate role is filled by S185. 5 residues coordinate Ca(2+): D254, D257, A259, D261, and I263. Residues N284, N347, N352, and N378 are each glycosylated (N-linked (GlcNAc...) asparagine). Residues D397 and H437 each act as charge relay system in the active site. 2 N-linked (GlcNAc...) asparagine glycosylation sites follow: N488 and N511. Residues C498 and C520 are joined by a disulfide bond.

This sequence belongs to the tannase family. As to quaternary structure, homodimer. Post-translationally, glycosylated.

It localises to the secreted. It carries out the reaction feruloyl-polysaccharide + H2O = ferulate + polysaccharide.. With respect to regulation, inhibited by the specific serine esterase inhibitor AEBSF. Involved in degradation of plant cell walls. Hydrolyzes of the feruloyl-arabinose ester bond in arabinoxylans as well as the feruloyl-galactose and feruloyl-arabinose ester bonds in pectin. The chain is Feruloyl esterase B (faeB) from Aspergillus niger.